The primary structure comprises 120 residues: NAD(P)H-quinone oxidoreductase subunit 3, chloroplastic (120 aa).

3 consecutive transmembrane segments (helical) span residues 7–27, 63–83, and 89–109; these read YDSF…AFSI, YMFA…YPWA, and LGLF…VGLV.

This sequence belongs to the complex I subunit 3 family. NDH is composed of at least 16 different subunits, 5 of which are encoded in the nucleus.

The protein resides in the plastid. It is found in the chloroplast thylakoid membrane. The catalysed reaction is a plastoquinone + NADH + (n+1) H(+)(in) = a plastoquinol + NAD(+) + n H(+)(out). The enzyme catalyses a plastoquinone + NADPH + (n+1) H(+)(in) = a plastoquinol + NADP(+) + n H(+)(out). Functionally, NDH shuttles electrons from NAD(P)H:plastoquinone, via FMN and iron-sulfur (Fe-S) centers, to quinones in the photosynthetic chain and possibly in a chloroplast respiratory chain. The immediate electron acceptor for the enzyme in this species is believed to be plastoquinone. Couples the redox reaction to proton translocation, and thus conserves the redox energy in a proton gradient. The polypeptide is NAD(P)H-quinone oxidoreductase subunit 3, chloroplastic (Adiantum capillus-veneris (Maidenhair fern)).